A 102-amino-acid chain; its full sequence is Large ribosomal subunit protein bL21 (102 aa).

This sequence belongs to the bacterial ribosomal protein bL21 family. In terms of assembly, part of the 50S ribosomal subunit. Contacts protein L20.

Functionally, this protein binds to 23S rRNA in the presence of protein L20. The polypeptide is Large ribosomal subunit protein bL21 (Oleidesulfovibrio alaskensis (strain ATCC BAA-1058 / DSM 17464 / G20) (Desulfovibrio alaskensis)).